A 452-amino-acid chain; its full sequence is tRNA modification GTPase MnmE (452 aa).

(6S)-5-formyl-5,6,7,8-tetrahydrofolate contacts are provided by arginine 21, glutamate 78, and lysine 118. Positions 214 to 375 constitute a TrmE-type G domain; the sequence is GMKVVIAGRP…LREHLKQAMG (162 aa). Asparagine 224 contacts K(+). GTP-binding positions include 224-229, 243-249, and 268-271; these read NAGKSS, TDIAGTT, and DTAG. Serine 228 lines the Mg(2+) pocket. The K(+) site is built by threonine 243, isoleucine 245, and threonine 248. Threonine 249 is a binding site for Mg(2+). Lysine 452 provides a ligand contact to (6S)-5-formyl-5,6,7,8-tetrahydrofolate.

It belongs to the TRAFAC class TrmE-Era-EngA-EngB-Septin-like GTPase superfamily. TrmE GTPase family. Homodimer. Heterotetramer of two MnmE and two MnmG subunits. K(+) serves as cofactor.

The protein resides in the cytoplasm. Its function is as follows. Exhibits a very high intrinsic GTPase hydrolysis rate. Involved in the addition of a carboxymethylaminomethyl (cmnm) group at the wobble position (U34) of certain tRNAs, forming tRNA-cmnm(5)s(2)U34. The sequence is that of tRNA modification GTPase MnmE from Haemophilus influenzae (strain ATCC 51907 / DSM 11121 / KW20 / Rd).